Here is a 294-residue protein sequence, read N- to C-terminus: MELAQSSPDETDSVIVDDAAFEGAAHPLFSRMPSSVSFNKLRKRLLRQVRQALDDFGMLKGSRRWLVGVSGGKDSYSLLALLMDLQWRGLLPVELVACNLDQGQPNFPKHVLPDYLRSIGVKHRIEYRDTYSIVKEKVPAGATYCSLCSRLRRGNLYRIGREEGCDALVLGHHREDILETFFMNFFHGGRLASMPAKLLNDEGDLTVLRPLAYAAEDDLAKFAAAMEFPIIPCDLCGSQDGLERNAMKAMLADIERRMPGRKDTMLRALGHVNASHLLDPKLFDFQSLSPEPKE.

A PP-loop motif motif is present at residues 70 to 75; sequence SGGKDS. Cysteine 145, cysteine 148, and cysteine 236 together coordinate [4Fe-4S] cluster.

Belongs to the TtcA family. In terms of assembly, homodimer. The cofactor is Mg(2+). [4Fe-4S] cluster is required as a cofactor.

The protein resides in the cytoplasm. It carries out the reaction cytidine(32) in tRNA + S-sulfanyl-L-cysteinyl-[cysteine desulfurase] + AH2 + ATP = 2-thiocytidine(32) in tRNA + L-cysteinyl-[cysteine desulfurase] + A + AMP + diphosphate + H(+). It participates in tRNA modification. In terms of biological role, catalyzes the ATP-dependent 2-thiolation of cytidine in position 32 of tRNA, to form 2-thiocytidine (s(2)C32). The sulfur atoms are provided by the cysteine/cysteine desulfurase (IscS) system. This Rhizobium meliloti (strain 1021) (Ensifer meliloti) protein is tRNA-cytidine(32) 2-sulfurtransferase.